The primary structure comprises 299 residues: tRNA dimethylallyltransferase (299 aa).

Residue 5–12 coordinates ATP; sequence GPTASGKT. A substrate-binding site is contributed by 7 to 12; the sequence is TASGKT. Interaction with substrate tRNA regions lie at residues 30–33, 154–158, and 235–240; these read DSAL, QRLSR, and RCVGYR.

Belongs to the IPP transferase family. As to quaternary structure, monomer. Mg(2+) serves as cofactor.

The enzyme catalyses adenosine(37) in tRNA + dimethylallyl diphosphate = N(6)-dimethylallyladenosine(37) in tRNA + diphosphate. Functionally, catalyzes the transfer of a dimethylallyl group onto the adenine at position 37 in tRNAs that read codons beginning with uridine, leading to the formation of N6-(dimethylallyl)adenosine (i(6)A). This is tRNA dimethylallyltransferase from Shewanella denitrificans (strain OS217 / ATCC BAA-1090 / DSM 15013).